A 178-amino-acid chain; its full sequence is uncharacterized protein (178 aa).

It is found in the mitochondrion. This is an uncharacterized protein from Paramecium tetraurelia.